We begin with the raw amino-acid sequence, 436 residues long: UPF0597 protein YhaM (436 aa).

It belongs to the UPF0597 family.

This chain is UPF0597 protein YhaM, found in Salmonella heidelberg (strain SL476).